Reading from the N-terminus, the 772-residue chain is Semaphorin-3A (772 aa).

The signal sequence occupies residues 1–22; it reads MGWLRGIALLSLGVLLAGRVNC. The region spanning 31–514 is the Sema domain; the sequence is RLKLSYKEML…SATGVSQLPL (484 aa). Asn53 is a glycosylation site (N-linked (GlcNAc...) asparagine). A disulfide bridge links Cys103 with Cys114. Asn125 carries N-linked (GlcNAc...) asparagine glycosylation. 4 cysteine pairs are disulfide-bonded: Cys132-Cys141, Cys269-Cys381, Cys293-Cys341, and Cys517-Cys535. Residues 576–665 form the Ig-like C2-type domain; sequence PSGQTLEEKI…GFIQTLLKVT (90 aa). Asn591 is a glycosylation site (N-linked (GlcNAc...) asparagine). Residues Cys650 and Cys723 are joined by a disulfide bond. Residues 730-772 are disordered; that stretch reads DRKQRRQRPANAQVNTNKWKHLQENKKGRNRRTHEFERAPRSV. Residues 750–772 are compositionally biased toward basic and acidic residues; sequence HLQENKKGRNRRTHEFERAPRSV.

It belongs to the semaphorin family. Expressed at relatively high levels in brain and muscle, moderate levels in lung, bursa, and heart and virtually absent in liver. Collapsin-1, -2, -3, and -5 bind to overlapping but distinct axon tracts.

The protein localises to the secreted. Functionally, induces the collapse and paralysis of neuronal growth cones. Could serve as a ligand that guides specific growth cones by a motility-inhibiting mechanism. Binds to neuropilin. This chain is Semaphorin-3A (SEMA3A), found in Gallus gallus (Chicken).